Here is a 236-residue protein sequence, read N- to C-terminus: Purine nucleoside phosphorylase DeoD-type (236 aa).

An a purine D-ribonucleoside-binding site is contributed by His-4. Residues Gly-20, Arg-24, Arg-43, and 87–90 (RVGT) each bind phosphate. A purine D-ribonucleoside-binding positions include 179-181 (EME) and 203-204 (SD). The Proton donor role is filled by Asp-204.

Belongs to the PNP/UDP phosphorylase family. Homohexamer; trimer of homodimers.

The enzyme catalyses a purine D-ribonucleoside + phosphate = a purine nucleobase + alpha-D-ribose 1-phosphate. It catalyses the reaction a purine 2'-deoxy-D-ribonucleoside + phosphate = a purine nucleobase + 2-deoxy-alpha-D-ribose 1-phosphate. Its function is as follows. Catalyzes the reversible phosphorolytic breakdown of the N-glycosidic bond in the beta-(deoxy)ribonucleoside molecules, with the formation of the corresponding free purine bases and pentose-1-phosphate. The protein is Purine nucleoside phosphorylase DeoD-type of Streptococcus pneumoniae (strain JJA).